The primary structure comprises 156 residues: Phosphopantetheine adenylyltransferase (156 aa).

S9 is a binding site for substrate. Residues 9–10 (SF) and H17 contribute to the ATP site. Substrate-binding residues include K41, I74, and K88. Residues 89–91 (GLR), E99, and 123–129 (LLHVSSS) contribute to the ATP site.

It belongs to the bacterial CoaD family. Homohexamer. Mg(2+) serves as cofactor.

The protein resides in the cytoplasm. The enzyme catalyses (R)-4'-phosphopantetheine + ATP + H(+) = 3'-dephospho-CoA + diphosphate. It participates in cofactor biosynthesis; coenzyme A biosynthesis; CoA from (R)-pantothenate: step 4/5. Reversibly transfers an adenylyl group from ATP to 4'-phosphopantetheine, yielding dephospho-CoA (dPCoA) and pyrophosphate. The polypeptide is Phosphopantetheine adenylyltransferase (Kocuria rhizophila (strain ATCC 9341 / DSM 348 / NBRC 103217 / DC2201)).